The following is a 445-amino-acid chain: Cryptochrome DASH (445 aa).

The 134-residue stretch at Lys-4–Leu-137 folds into the Photolyase/cryptochrome alpha/beta domain.

The protein belongs to the DNA photolyase class-1 family. FAD serves as cofactor. Requires (6R)-5,10-methylene-5,6,7,8-tetrahydrofolate as cofactor.

In terms of biological role, may have a photoreceptor function. Binds DNA; probably functions as a transcriptional repressor. This is Cryptochrome DASH (cry) from Vibrio parahaemolyticus serotype O3:K6 (strain RIMD 2210633).